The primary structure comprises 571 residues: Adenine deaminase (571 aa).

The protein belongs to the metallo-dependent hydrolases superfamily. Adenine deaminase family. The cofactor is Mn(2+).

The enzyme catalyses adenine + H2O + H(+) = hypoxanthine + NH4(+). In Dehalococcoides mccartyi (strain ATCC BAA-2266 / KCTC 15142 / 195) (Dehalococcoides ethenogenes (strain 195)), this protein is Adenine deaminase.